A 576-amino-acid polypeptide reads, in one-letter code: Septation ring formation regulator EzrA (576 aa).

The Extracellular segment spans residues 1–7 (MSSTVII). A helical transmembrane segment spans residues 8-26 (LIVVLLVILVAFYAFAILM). Residues 27–576 (RKKTEDRILA…FKNKPTPDYL (550 aa)) lie on the Cytoplasmic side of the membrane. 2 coiled-coil regions span residues 105–134 (RARE…VAQL) and 277–301 (EQFE…LYAI).

It belongs to the EzrA family.

The protein resides in the cell membrane. Functionally, negative regulator of FtsZ ring formation; modulates the frequency and position of FtsZ ring formation. Inhibits FtsZ ring formation at polar sites. Interacts either with FtsZ or with one of its binding partners to promote depolymerization. This chain is Septation ring formation regulator EzrA, found in Lactococcus lactis subsp. lactis (strain IL1403) (Streptococcus lactis).